The following is a 555-amino-acid chain: CTP synthase (555 aa).

Positions 1–265 (MTRYIFITGG…GNRVCEKLNI (265 aa)) are amidoligase domain. Ser13 contacts CTP. Residue Ser13 coordinates UTP. Residues 14-19 (SLGKGI) and Asp71 contribute to the ATP site. Mg(2+)-binding residues include Asp71 and Glu139. Residues 146–148 (DIE), 186–191 (KTKPTQ), and Lys222 each bind CTP. Residues 186-191 (KTKPTQ) and Lys222 contribute to the UTP site. One can recognise a Glutamine amidotransferase type-1 domain in the interval 290–541 (TVAVVGKYVD…IKAGLAAKEA (252 aa)). Residue Gly351 participates in L-glutamine binding. Residue Cys378 is the Nucleophile; for glutamine hydrolysis of the active site. Residues 379-382 (LGMQ), Glu402, and Arg469 contribute to the L-glutamine site. Catalysis depends on residues His514 and Glu516.

Belongs to the CTP synthase family. In terms of assembly, homotetramer.

It catalyses the reaction UTP + L-glutamine + ATP + H2O = CTP + L-glutamate + ADP + phosphate + 2 H(+). The enzyme catalyses L-glutamine + H2O = L-glutamate + NH4(+). It carries out the reaction UTP + NH4(+) + ATP = CTP + ADP + phosphate + 2 H(+). The protein operates within pyrimidine metabolism; CTP biosynthesis via de novo pathway; CTP from UDP: step 2/2. With respect to regulation, allosterically activated by GTP, when glutamine is the substrate; GTP has no effect on the reaction when ammonia is the substrate. The allosteric effector GTP functions by stabilizing the protein conformation that binds the tetrahedral intermediate(s) formed during glutamine hydrolysis. Inhibited by the product CTP, via allosteric rather than competitive inhibition. In terms of biological role, catalyzes the ATP-dependent amination of UTP to CTP with either L-glutamine or ammonia as the source of nitrogen. Regulates intracellular CTP levels through interactions with the four ribonucleotide triphosphates. This chain is CTP synthase, found in Coxiella burnetii (strain RSA 331 / Henzerling II).